Reading from the N-terminus, the 361-residue chain is MDETTERPTVSFSYSNWISNIKKSTREAYEAKPFSHWILLFFSGAAMLIAFPASSLLSRLYFSNGGKSKWIISWVAVAGWPITCLILLPTYIFQKIKPTPLNTKLVLSYVVLGFLSAADNLMYAYAYAYLPASTSSLLASSSLAFSALFGYLIVKNPLNASVINSIVVITGAMAIIALDSSSDRYSYISNSQYFAGFFWDIMGSALHGLIFALSELLFVKLLGRRSFHVALEQQVMVSLTAFAFTTIGMVVSNDFQGMSHEAKSFKGGESLYTQVLVWSAVTFQLGVLGATAVLFLASTVMAGVLNAVRVPITSVAAVILMHDPMSGFKILSLVLTFWGFSSYIYGSSSSNSSTQASSSSS.

9 helical membrane-spanning segments follow: residues 37 to 57 (WILL…SSLL), 70 to 90 (WIIS…LLPT), 105 to 125 (LVLS…MYAY), 134 to 154 (TSSL…YLIV), 158 to 178 (LNAS…IIAL), 193 to 213 (YFAG…IFAL), 235 to 255 (VMVS…SNDF), 285 to 305 (LGVL…AGVL), and 315 to 335 (VAAV…SLVL). Positions 75–178 (VAVAGWPITC…ITGAMAIIAL (104 aa)) constitute an EamA domain.

Belongs to the purine permeases (TC 2.A.7.14) family.

Its subcellular location is the membrane. This is Probable purine permease 5 (PUP5) from Arabidopsis thaliana (Mouse-ear cress).